The sequence spans 558 residues: Dihydroxy-acid dehydratase (558 aa).

Cysteine 49 provides a ligand contact to [2Fe-2S] cluster. Residue aspartate 81 participates in Mg(2+) binding. Cysteine 122 is a [2Fe-2S] cluster binding site. 2 residues coordinate Mg(2+): aspartate 123 and lysine 124. N6-carboxylysine is present on lysine 124. A [2Fe-2S] cluster-binding site is contributed by cysteine 194. Residue glutamate 446 coordinates Mg(2+). Serine 472 serves as the catalytic Proton acceptor.

The protein belongs to the IlvD/Edd family. In terms of assembly, homodimer. [2Fe-2S] cluster is required as a cofactor. Requires Mg(2+) as cofactor.

The enzyme catalyses (2R)-2,3-dihydroxy-3-methylbutanoate = 3-methyl-2-oxobutanoate + H2O. It catalyses the reaction (2R,3R)-2,3-dihydroxy-3-methylpentanoate = (S)-3-methyl-2-oxopentanoate + H2O. It functions in the pathway amino-acid biosynthesis; L-isoleucine biosynthesis; L-isoleucine from 2-oxobutanoate: step 3/4. Its pathway is amino-acid biosynthesis; L-valine biosynthesis; L-valine from pyruvate: step 3/4. Its function is as follows. Functions in the biosynthesis of branched-chain amino acids. Catalyzes the dehydration of (2R,3R)-2,3-dihydroxy-3-methylpentanoate (2,3-dihydroxy-3-methylvalerate) into 2-oxo-3-methylpentanoate (2-oxo-3-methylvalerate) and of (2R)-2,3-dihydroxy-3-methylbutanoate (2,3-dihydroxyisovalerate) into 2-oxo-3-methylbutanoate (2-oxoisovalerate), the penultimate precursor to L-isoleucine and L-valine, respectively. The sequence is that of Dihydroxy-acid dehydratase from Synechococcus sp. (strain RCC307).